The primary structure comprises 534 residues: GMP synthase [glutamine-hydrolyzing] (534 aa).

The 199-residue stretch at 4 to 202 (KILILDFGSQ…VLEIAKAQPD (199 aa)) folds into the Glutamine amidotransferase type-1 domain. C81 (nucleophile) is an active-site residue. Residues H176 and E178 contribute to the active site. In terms of domain architecture, GMPS ATP-PPase spans 203–402 (WVMKDHVAEA…LGLPHDMVYR (200 aa)). 230 to 236 (SGGVDSS) contributes to the ATP binding site.

As to quaternary structure, homodimer.

The enzyme catalyses XMP + L-glutamine + ATP + H2O = GMP + L-glutamate + AMP + diphosphate + 2 H(+). Its pathway is purine metabolism; GMP biosynthesis; GMP from XMP (L-Gln route): step 1/1. Functionally, catalyzes the synthesis of GMP from XMP. In Methylibium petroleiphilum (strain ATCC BAA-1232 / LMG 22953 / PM1), this protein is GMP synthase [glutamine-hydrolyzing].